A 210-amino-acid chain; its full sequence is Riboflavin kinase (210 aa).

The interval 1–81 (MECKERRLIG…DLLRYFNIAS (81 aa)) is H-T-H motif-like. The segment at 82–210 (IRLIGRVISG…GDIVEVEILL (129 aa)) is riboflavin kinase. Position 91 to 96 (91 to 96 (GLGEGA)) interacts with CDP. Mg(2+)-binding residues include threonine 120 and asparagine 122. 2 residues coordinate FMN: threonine 177 and glutamate 185. A CDP-binding site is contributed by 190 to 193 (VKLR).

The protein belongs to the archaeal riboflavin kinase family. The cofactor is Mg(2+).

It catalyses the reaction riboflavin + CTP = CDP + FMN + H(+). It participates in cofactor biosynthesis; FMN biosynthesis; FMN from riboflavin (CTP route): step 1/1. In terms of biological role, catalyzes the CTP-dependent phosphorylation of riboflavin (vitamin B2) to form flavin mononucleotide (FMN). The sequence is that of Riboflavin kinase (ribK) from Pyrobaculum aerophilum (strain ATCC 51768 / DSM 7523 / JCM 9630 / CIP 104966 / NBRC 100827 / IM2).